We begin with the raw amino-acid sequence, 249 residues long: Diaminopimelate epimerase (249 aa).

Residues asparagine 11 and asparagine 60 each contribute to the substrate site. The Proton donor role is filled by cysteine 69. Substrate is bound by residues glycine 70–asparagine 71, asparagine 164, and glutamate 182–arginine 183. Catalysis depends on cysteine 192, which acts as the Proton acceptor. Glycine 193 to threonine 194 serves as a coordination point for substrate.

Belongs to the diaminopimelate epimerase family. In terms of assembly, homodimer.

Its subcellular location is the cytoplasm. It carries out the reaction (2S,6S)-2,6-diaminopimelate = meso-2,6-diaminopimelate. The protein operates within amino-acid biosynthesis; L-lysine biosynthesis via DAP pathway; DL-2,6-diaminopimelate from LL-2,6-diaminopimelate: step 1/1. Catalyzes the stereoinversion of LL-2,6-diaminopimelate (L,L-DAP) to meso-diaminopimelate (meso-DAP), a precursor of L-lysine and an essential component of the bacterial peptidoglycan. The sequence is that of Diaminopimelate epimerase from Campylobacter lari (strain RM2100 / D67 / ATCC BAA-1060).